A 60-amino-acid polypeptide reads, in one-letter code: Potassium channel toxin-like Tx677 (60 aa).

The N-terminal stretch at 1–22 is a signal peptide; sequence MKISALVMITLLICSMMILCQG. Disulfide bonds link Cys30-Cys51, Cys36-Cys56, and Cys40-Cys58.

Belongs to the short scorpion toxin superfamily. Potassium channel inhibitor family. Expressed by the venom gland.

The protein resides in the secreted. Weakly inhibits Kv11.1/KCNH2/ERG1, Kv1.2/KCNA2 and Kv1.3/KCNA3 voltage-gated potassium channels. This chain is Potassium channel toxin-like Tx677, found in Buthus israelis (Israeli scorpion).